Here is a 106-residue protein sequence, read N- to C-terminus: Venom family 8-like peptide Pr8a (106 aa).

Residues methionine 1 to serine 17 form the signal peptide.

In terms of processing, contains 2 disulfide bonds. As to expression, expressed by the venom gland (anterior main gland) (at protein level).

It is found in the secreted. The polypeptide is Venom family 8-like peptide Pr8a (Platymeris rhadamanthus (Red spot assassin bug)).